The following is a 447-amino-acid chain: MDEEYDVIVLGTGLTECILSGIMSVNGKKVLHMDRNPYYGGESSSITPLEELYKRFQLLEGPPETMGRGRDWNVDLIPKFLMANGQLVKMLLYTEVTRYLDFKVVEGSFVYKGGKIYKVPSTETEALASNLMGMFEKRRFRKFLVFVANFDENDPKTFEGVDPQNTSMRDVYRKFDLGQDVIDFTGHALALYRTDDYLDQPCLETINRIKLYSESLARYGKSPYLYPLYGLGELPQGFARLSAIYGGTYMLNKPVDDIIMENGKVVGVKSEGEVARCKQLICDPSYVPDRVRKAGQVIRIICILSHPIKNTNDANSCQIIIPQNQVNRKSDIYVCMISYAHNVAAQGKYIAIASTTVETTDPEKEVEPALELLEPIDQKFVAISDLYEPIDDGSESQVFCSCSYDATTHFETTCNDIKDIYKRMAGSAFDFENMKRKQNDVFGEADQ.

S427 carries the post-translational modification Phosphoserine.

This sequence belongs to the Rab GDI family. Interacts with RHOH. Interacts with the non-phosphorylated forms of RAB1A, RAB3A, RAB5A, RAB5B, RAB5C, RAB8A, RAB8B, RAB10, RAB12, RAB35, and RAB43. Interacts with RAB3A.

It localises to the cytoplasm. The protein localises to the golgi apparatus. The protein resides in the trans-Golgi network. Functionally, regulates the GDP/GTP exchange reaction of most Rab proteins by inhibiting the dissociation of GDP from them, and the subsequent binding of GTP to them. Promotes the dissociation of GDP-bound Rab proteins from the membrane and inhibits their activation. Promotes the dissociation of RAB1A, RAB3A, RAB5A and RAB10 from membranes. The chain is Rab GDP dissociation inhibitor alpha (GDI1) from Bos taurus (Bovine).